Here is a 112-residue protein sequence, read N- to C-terminus: MNALTSMKCEACQADAPKVSDQELAELIRLIPDWGVEVRDGIMQLERVYKFKNFKLAMAFTNKLADAAEEEGHHPGILTEWGKVTVTWWSHSIKGLHKNDFIMAAKTDQLLD.

It belongs to the pterin-4-alpha-carbinolamine dehydratase family.

The enzyme catalyses (4aS,6R)-4a-hydroxy-L-erythro-5,6,7,8-tetrahydrobiopterin = (6R)-L-erythro-6,7-dihydrobiopterin + H2O. This chain is Putative pterin-4-alpha-carbinolamine dehydratase, found in Shewanella denitrificans (strain OS217 / ATCC BAA-1090 / DSM 15013).